The primary structure comprises 153 residues: E3 ubiquitin-protein ligase AIRP1 (153 aa).

An RING-type; atypical zinc finger spans residues 104–145; sequence CPICLEEYEIDNPKLLTKCGHDFHLACILAWMERSEACPVCD.

The protein localises to the cytoplasm. Its subcellular location is the cytosol. It carries out the reaction S-ubiquitinyl-[E2 ubiquitin-conjugating enzyme]-L-cysteine + [acceptor protein]-L-lysine = [E2 ubiquitin-conjugating enzyme]-L-cysteine + N(6)-ubiquitinyl-[acceptor protein]-L-lysine.. Functionally, possesses E3 ubiquitin-protein ligase activity in vitro when associated with the E2 enzyme UBC8 in vitro. Plays combinatory roles with AIRP2 in the positive regulation of the abscisic acid-mediated drought stress response. This is E3 ubiquitin-protein ligase AIRP1 from Arabidopsis thaliana (Mouse-ear cress).